A 425-amino-acid chain; its full sequence is Elongation factor 1-alpha (425 aa).

The region spanning 5–221 (KPHMNLAVIG…DLFKMPDMPT (217 aa)) is the tr-type G domain. The interval 14–21 (GHIDHGKS) is G1. 14–21 (GHIDHGKS) lines the GTP pocket. Residue Ser21 participates in Mg(2+) binding. A G2 region spans residues 70–74 (GITID). The tract at residues 91–94 (DCPG) is G3. GTP contacts are provided by residues 91-95 (DCPGH) and 146-149 (NKMD). The interval 146–149 (NKMD) is G4. The segment at 185-187 (SAF) is G5.

This sequence belongs to the TRAFAC class translation factor GTPase superfamily. Classic translation factor GTPase family. EF-Tu/EF-1A subfamily.

The protein resides in the cytoplasm. The enzyme catalyses GTP + H2O = GDP + phosphate + H(+). Its function is as follows. GTP hydrolase that promotes the GTP-dependent binding of aminoacyl-tRNA to the A-site of ribosomes during protein biosynthesis. The chain is Elongation factor 1-alpha from Methanocorpusculum labreanum (strain ATCC 43576 / DSM 4855 / Z).